The primary structure comprises 224 residues: MTLFHFGNCFALAYFPYFITYKCSGLSEYNAFWKCVQAGVTYLFVQLCKMLFLATFFPTWEGGIYDFIGEFMKASVDVADLIGLNLVMSRNAGKGEYKIMVAALGWATAELIMSRCIPLWVGARGIEFDWKYIQMSIDSNISLVHYIVASAQVWMITRYDLYHTFRPAVLLLMFLSVYKAFVMETFVHLCSLGSWTALLARAVVTGLLALSTLALYVAVVNVHS.

Residues 1 to 21 (MTLFHFGNCFALAYFPYFITY) traverse the membrane as a helical segment. The Cytoplasmic portion of the chain corresponds to 22 to 34 (KCSGLSEYNAFWK). The helical transmembrane segment at 35-58 (CVQAGVTYLFVQLCKMLFLATFFP) threads the bilayer. Residues 59 to 66 (TWEGGIYD) lie on the Lumenal side of the membrane. The helical transmembrane segment at 67-88 (FIGEFMKASVDVADLIGLNLVM) threads the bilayer. Residues 89–98 (SRNAGKGEYK) are Cytoplasmic-facing. Residues 99–124 (IMVAALGWATAELIMSRCIPLWVGAR) traverse the membrane as a helical segment. Residues 125–129 (GIEFD) lie on the Lumenal side of the membrane. A helical membrane pass occupies residues 130–155 (WKYIQMSIDSNISLVHYIVASAQVWM). At 156–164 (ITRYDLYHT) the chain is on the cytoplasmic side. Residues 165–187 (FRPAVLLLMFLSVYKAFVMETFV) form a helical membrane-spanning segment. Residues 188 to 194 (HLCSLGS) are Lumenal-facing. Residues 195-216 (WTALLARAVVTGLLALSTLALY) traverse the membrane as a helical segment. At 217–224 (VAVVNVHS) the chain is on the cytoplasmic side.

Belongs to the TMEM147 family. As to quaternary structure, component of the back of Sec61 (BOS) complex, composed of NCLN/Nicalin, NOMO1 and TMEM147. The BOS complex is part of the multi-pass translocon (MPT) complex, composed of three subcomplexes, the GEL complex (composed of RAB5IF/OPTI and TMCO1), the BOS complex (composed of NCLN/Nicalin, NOMO1 and TMEM147) and the PAT complex (composed of WDR83OS/Asterix and CCDC47). The MPT complex associates with the SEC61 complex. Interacts with CHRM3, CHRM1 and AVPR2. Interacts with LBR; promoting LBR localization to the nucleus inner membrane. Interacts with DHCR7.

It is found in the endoplasmic reticulum membrane. Its subcellular location is the nucleus membrane. The protein localises to the cell membrane. Its function is as follows. Component of the multi-pass translocon (MPT) complex that mediates insertion of multi-pass membrane proteins into the lipid bilayer of membranes. The MPT complex takes over after the SEC61 complex: following membrane insertion of the first few transmembrane segments of proteins by the SEC61 complex, the MPT complex occludes the lateral gate of the SEC61 complex to promote insertion of subsequent transmembrane regions. Also acts as a negative regulator of CHRM3 function, most likely by interfering with its trafficking to the cell membrane. Negatively regulates CHRM3-mediated calcium mobilization and activation of RPS6KA1/p90RSK activity. Regulates LBR localization to the nucleus inner membrane. The sequence is that of BOS complex subunit TMEM147 from Canis lupus familiaris (Dog).